The sequence spans 581 residues: Zinc metalloproteinase nas-36 (581 aa).

A propeptide spanning residues 1 to 95 is cleaved from the precursor; it reads MKEIAHSQAY…FRGANEKGKR (95 aa). Asn67 carries an N-linked (GlcNAc...) asparagine glycan. Residues 97-290 enclose the Peptidase M12A domain; that stretch reads AAEYDAKWFQ…IKLINEAYCK (194 aa). Intrachain disulfides connect Cys137–Cys289, Cys159–Cys178, Cys293–Cys313, Cys315–Cys324, and Cys336–Cys364. His186 contributes to the Zn(2+) binding site. Glu187 is an active-site residue. Positions 190 and 196 each coordinate Zn(2+). The EGF-like domain occupies 285-325; the sequence is NEAYCKGDCKEKNECKNGGYLNPSNCQSCLCPSGFGGSKCE. In terms of domain architecture, CUB spans 336-449; sequence CGGTLKAIID…TGFKLKFRKT (114 aa). N-linked (GlcNAc...) asparagine glycosylation is present at Asn418. A TSP type-1 domain is found at 474-523; it reads NDIWSEWGEWSQCSRSCGACGIKSRLRICKTAQCSGKVQQFLTCNLQACP. 3 cysteine pairs are disulfide-bonded: Cys486-Cys517, Cys490-Cys522, and Cys502-Cys507.

Requires Zn(2+) as cofactor.

Its subcellular location is the secreted. With respect to regulation, inhibited by 1,10-phenanthroline. Its function is as follows. Metalloprotease. Involved in molting, a process during larval stages in which a new cuticle is formed and the old cuticle is shed. The protein is Zinc metalloproteinase nas-36 of Brugia malayi (Filarial nematode worm).